Here is a 141-residue protein sequence, read N- to C-terminus: Large ribosomal subunit protein uL11 (141 aa).

It belongs to the universal ribosomal protein uL11 family. As to quaternary structure, part of the ribosomal stalk of the 50S ribosomal subunit. Interacts with L10 and the large rRNA to form the base of the stalk. L10 forms an elongated spine to which L12 dimers bind in a sequential fashion forming a multimeric L10(L12)X complex. One or more lysine residues are methylated.

Its function is as follows. Forms part of the ribosomal stalk which helps the ribosome interact with GTP-bound translation factors. This is Large ribosomal subunit protein uL11 from Roseiflexus castenholzii (strain DSM 13941 / HLO8).